We begin with the raw amino-acid sequence, 208 residues long: GATA transcription factor 20 (208 aa).

The segment at 94-119 (CASCDTTSTPLWRNGPKGPKSLCNAC) adopts a GATA-type zinc-finger fold.

The protein belongs to the type IV zinc-finger family. Class B subfamily.

The protein localises to the nucleus. Transcriptional regulator that specifically binds 5'-GATA-3' or 5'-GAT-3' motifs within gene promoters. The polypeptide is GATA transcription factor 20 (Arabidopsis thaliana (Mouse-ear cress)).